The following is a 238-amino-acid chain: DNA repair protein RecO (238 aa).

This sequence belongs to the RecO family.

In terms of biological role, involved in DNA repair and RecF pathway recombination. The polypeptide is DNA repair protein RecO (Hahella chejuensis (strain KCTC 2396)).